An 862-amino-acid polypeptide reads, in one-letter code: Transcription initiation factor TFIID subunit 4B (862 aa).

The tract at residues 100–241 is sufficient for interaction with ZNF628; sequence NTTTIQFPAN…TPSNEPNLKA (142 aa). A compositionally biased stretch (polar residues) spans 219-237; the sequence is VTTLKPSSLGASSTPSNEP. The segment at 219–239 is disordered; it reads VTTLKPSSLGASSTPSNEPNL. Residues 256–353 enclose the TAFH domain; sequence LENVKKCKNF…CVQQTSSDMV (98 aa). The segment at 511 to 533 is required for interaction with P65/RELA; that stretch reads PGPVLSQPAGIPQAVQVKQLVVQ. Positions 516-556 match the Nuclear export signal motif; it reads SQPAGIPQAVQVKQLVVQQPSGGNEKQVTTISHSSTLTIQK. A Phosphoserine modification is found at S595. The region spanning 653 to 702 is the Histone-fold domain; it reads PFLFIGALQKRILDIGKKHDITELNSDAVNLISQATQERLRGLLEKLTAI. Positions 722–787 form a coiled coil; that stretch reads TRSQLKFLEK…LAQIQHRDAN (66 aa). A required for interaction with TAF12 region spans residues 830–862; it reads PRITRICLRDLIFCMEQEREMKYSRALYLALLK.

It belongs to the TAF4 family. In terms of assembly, TFIID is composed of TATA binding protein (TBP) and a number of TBP-associated factors (TAFs). Heterodimerizes with TAF12/TFII20 via the C-terminal H2A-like histone-fold domain. This heterodimer forms a histone-like octamer with the TAF6/TAFII70-TAF9/TAFII31 heterodimer. Interacts with P65/RELA homodimers and P65/RELA-REL heterodimers. Interaction with POU2AF1, via its C-terminal activation domain, is required for octamer-dependent transcription. Interacts with ZNF628. Under stimulation by forskolin, Isoform 1 is phosphorylated by protein kinase A (PKA). As to expression, preferentially expressed in ovarian granulosa cells (at protein level). Highly expressed in B-cells.

Its subcellular location is the nucleus. It is found in the cytoplasm. Functionally, cell type-specific subunit of the general transcription factor TFIID that may function as a gene-selective coactivator in certain cells. TFIID is a multimeric protein complex that plays a central role in mediating promoter responses to various activators and repressors. TAF4B is a transcriptional coactivator of the p65/RELA NF-kappa-B subunit. Involved in the activation of a subset of antiapoptotic genes including TNFAIP3. May be involved in regulating folliculogenesis. Through interaction with OCBA/POU2AF1, acts as a coactivator of B-cell-specific transcription. Plays a role in spermiogenesis and oogenesis. The polypeptide is Transcription initiation factor TFIID subunit 4B (TAF4B) (Homo sapiens (Human)).